We begin with the raw amino-acid sequence, 129 residues long: Large ribosomal subunit protein eL32 (129 aa).

The protein belongs to the eukaryotic ribosomal protein eL32 family.

This is Large ribosomal subunit protein eL32 (rpl32e) from Methanosarcina mazei (strain ATCC BAA-159 / DSM 3647 / Goe1 / Go1 / JCM 11833 / OCM 88) (Methanosarcina frisia).